A 264-amino-acid polypeptide reads, in one-letter code: Thiazole synthase (264 aa).

Lys106 acts as the Schiff-base intermediate with DXP in catalysis. Residues Gly167, 193–194 (AG), and 215–216 (NT) contribute to the 1-deoxy-D-xylulose 5-phosphate site.

It belongs to the ThiG family. As to quaternary structure, homotetramer. Forms heterodimers with either ThiH or ThiS.

Its subcellular location is the cytoplasm. The catalysed reaction is [ThiS sulfur-carrier protein]-C-terminal-Gly-aminoethanethioate + 2-iminoacetate + 1-deoxy-D-xylulose 5-phosphate = [ThiS sulfur-carrier protein]-C-terminal Gly-Gly + 2-[(2R,5Z)-2-carboxy-4-methylthiazol-5(2H)-ylidene]ethyl phosphate + 2 H2O + H(+). It participates in cofactor biosynthesis; thiamine diphosphate biosynthesis. Functionally, catalyzes the rearrangement of 1-deoxy-D-xylulose 5-phosphate (DXP) to produce the thiazole phosphate moiety of thiamine. Sulfur is provided by the thiocarboxylate moiety of the carrier protein ThiS. In vitro, sulfur can be provided by H(2)S. The chain is Thiazole synthase from Thioalkalivibrio sulfidiphilus (strain HL-EbGR7).